A 246-amino-acid polypeptide reads, in one-letter code: ATP synthase subunit a (246 aa).

5 consecutive transmembrane segments (helical) span residues 34 to 54, 92 to 112, 130 to 150, 155 to 175, and 196 to 216; these read GQTM…TFIG, WVPL…LGQL, DINT…YAGL, FGYF…VLEF, and VVAV…MILF.

This sequence belongs to the ATPase A chain family. As to quaternary structure, F-type ATPases have 2 components, CF(1) - the catalytic core - and CF(0) - the membrane proton channel. CF(1) has five subunits: alpha(3), beta(3), gamma(1), delta(1), epsilon(1). CF(0) has four main subunits: a, b, b' and c.

Its subcellular location is the cell inner membrane. Key component of the proton channel; it plays a direct role in the translocation of protons across the membrane. The polypeptide is ATP synthase subunit a (Gloeobacter violaceus (strain ATCC 29082 / PCC 7421)).